The following is a 132-amino-acid chain: Small ribosomal subunit protein uS8 (132 aa).

The protein belongs to the universal ribosomal protein uS8 family. As to quaternary structure, part of the 30S ribosomal subunit. Contacts proteins S5 and S12.

Functionally, one of the primary rRNA binding proteins, it binds directly to 16S rRNA central domain where it helps coordinate assembly of the platform of the 30S subunit. This Bartonella quintana (strain Toulouse) (Rochalimaea quintana) protein is Small ribosomal subunit protein uS8.